Reading from the N-terminus, the 195-residue chain is Thymidine kinase (195 aa).

ATP is bound by residues 15–22 and 88–91; these read GSMFSGKS and DEVQ. Residue Glu89 is the Proton acceptor of the active site. Zn(2+)-binding residues include Cys145, Cys148, Cys183, and Cys186.

The protein belongs to the thymidine kinase family. As to quaternary structure, homotetramer.

The protein resides in the cytoplasm. It carries out the reaction thymidine + ATP = dTMP + ADP + H(+). In Bacillus cereus (strain AH187), this protein is Thymidine kinase.